We begin with the raw amino-acid sequence, 130 residues long: Ribonuclease P protein component (130 aa).

This sequence belongs to the RnpA family. Consists of a catalytic RNA component (M1 or rnpB) and a protein subunit.

It carries out the reaction Endonucleolytic cleavage of RNA, removing 5'-extranucleotides from tRNA precursor.. In terms of biological role, RNaseP catalyzes the removal of the 5'-leader sequence from pre-tRNA to produce the mature 5'-terminus. It can also cleave other RNA substrates such as 4.5S RNA. The protein component plays an auxiliary but essential role in vivo by binding to the 5'-leader sequence and broadening the substrate specificity of the ribozyme. The polypeptide is Ribonuclease P protein component (Desulfovibrio desulfuricans (strain ATCC 27774 / DSM 6949 / MB)).